The following is a 657-amino-acid chain: Replication restart protein PriA (657 aa).

The Helicase ATP-binding domain maps to 143 to 309 (ITASTGARSF…LRGAVRRLPL (167 aa)). Residue 156–163 (GVTGSGKT) participates in ATP binding. Residues 252 to 255 (DEEH) carry the DEAH box motif. Residues Cys366, Cys369, Cys375, Cys378, Cys393, Cys396, Cys406, and Cys409 each coordinate Zn(2+). One can recognise a Helicase C-terminal domain in the interval 390–570 (AMQCHYCGRQ…PFVRLIRFVF (181 aa)).

Belongs to the helicase family. PriA subfamily. Component of the replication restart primosome. It depends on Zn(2+) as a cofactor.

It carries out the reaction Couples ATP hydrolysis with the unwinding of duplex DNA by translocating in the 3'-5' direction.. It catalyses the reaction ATP + H2O = ADP + phosphate + H(+). Initiates the restart of stalled replication forks, which reloads the replicative helicase on sites other than the origin of replication. Recognizes and binds to abandoned replication forks and remodels them to uncover a helicase loading site. Promotes assembly of the primosome at these replication forks. This chain is Replication restart protein PriA, found in Treponema pallidum (strain Nichols).